The primary structure comprises 317 residues: Transcription factor EC (317 aa).

The necessary for transcriptional transactivation stretch occupies residues 1-90 (MTLDHRLFSQ…GLMNASCPSI (90 aa)). One can recognise a bHLH domain in the interval 110 to 163 (QKKDNHNLIERRRRYNINYRIKELGTLIPKSNDPDIRWNKGTILKASVDYIKWL). A necessary for transcriptional transactivation region spans residues 242-317 (TSPEFYEQAV…SLSSEDGDEL (76 aa)).

Belongs to the MiT/TFE family. Homodimer. Forms heterodimers with TFE3. Forms heterodimers with MITF. Interacts with MITF. In terms of tissue distribution, expressed in kidney, spleen, lung, liver, testis and muscle.

It is found in the nucleus. Functionally, transcriptional regulator that acts as a repressor or an activator. Acts as a transcriptional repressor on minimal promoter containing mu E3 enhancer sequence. Binds to mu E3 DNA sequence of the immunoglobulin heavy-chain gene enhancer. Acts as a transcriptional transactivator on the proximal promoter region of the tartrate-resistant acid phosphatase (TRAP) E-box containing promoter. Collaborates with MITF in target gene activation. Acts as a transcriptional repressor on minimal promoter containing mu E3 enhancer sequence. Binds to mu E3 DNA sequence of the immunoglobulin heavy-chain gene enhancer. Binds DNA in a homo- or heterodimeric form. This Rattus norvegicus (Rat) protein is Transcription factor EC (Tfec).